A 167-amino-acid polypeptide reads, in one-letter code: Leptin (167 aa).

An N-terminal signal peptide occupies residues 1–21; that stretch reads MRCGPLYQFLWLWPYLSYVEA. An intrachain disulfide couples C117 to C167.

This sequence belongs to the leptin family.

Its subcellular location is the secreted. In terms of biological role, key player in the regulation of energy balance and body weight control. Once released into the circulation, has central and peripheral effects by binding LEPR, found in many tissues, which results in the activation of several major signaling pathways. In the hypothalamus, acts as an appetite-regulating factor that induces a decrease in food intake and an increase in energy consumption by inducing anorexinogenic factors and suppressing orexigenic neuropeptides, also regulates bone mass and secretion of hypothalamo-pituitary-adrenal hormones. In the periphery, increases basal metabolism, influences reproductive function, regulates pancreatic beta-cell function and insulin secretion, is pro-angiogenic for endothelial cell and affects innate and adaptive immunity. In the arcuate nucleus of the hypothalamus, activates by depolarization POMC neurons inducing FOS and SOCS3 expression to release anorexigenic peptides and inhibits by hyperpolarization NPY neurons inducing SOCS3 with a consequent reduction on release of orexigenic peptides. In addition to its known satiety inducing effect, has a modulatory role in nutrient absorption. In the intestine, reduces glucose absorption by enterocytes by activating PKC and leading to a sequential activation of p38, PI3K and ERK signaling pathways which exerts an inhibitory effect on glucose absorption. Acts as a growth factor on certain tissues, through the activation of different signaling pathways increases expression of genes involved in cell cycle regulation such as CCND1, via JAK2-STAT3 pathway, or VEGFA, via MAPK1/3 and PI3K-AKT1 pathways. May also play an apoptotic role via JAK2-STAT3 pathway and up-regulation of BIRC5 expression. Pro-angiogenic, has mitogenic activity on vascular endothelial cells and plays a role in matrix remodeling by regulating the expression of matrix metalloproteinases (MMPs) and tissue inhibitors of metalloproteinases (TIMPs). In innate immunity, modulates the activity and function of neutrophils by increasing chemotaxis and the secretion of oxygen radicals. Increases phagocytosis by macrophages and enhances secretion of pro-inflammatory mediators. Increases cytotoxic ability of NK cells. Plays a pro-inflammatory role, in synergy with IL1B, by inducing NOS2 which promotes the production of IL6, IL8 and Prostaglandin E2, through a signaling pathway that involves JAK2, PI3K, MAP2K1/MEK1 and MAPK14/p38. In adaptive immunity, promotes the switch of memory T-cells towards T helper-1 cell immune responses. Increases CD4(+)CD25(-) T-cell proliferation and reduces autophagy during TCR (T-cell receptor) stimulation, through MTOR signaling pathway activation and BCL2 up-regulation. This is Leptin (LEP) from Bubalus bubalis (Domestic water buffalo).